The chain runs to 293 residues: Ribonuclease HIII (293 aa).

Positions 78-293 (LPLIGTDEVG…TEKAKKRLER (216 aa)) constitute an RNase H type-2 domain. Asp-84, Glu-85, and Asp-187 together coordinate a divalent metal cation.

This sequence belongs to the RNase HII family. RnhC subfamily. Requires Mn(2+) as cofactor. Mg(2+) serves as cofactor.

It localises to the cytoplasm. It catalyses the reaction Endonucleolytic cleavage to 5'-phosphomonoester.. Endonuclease that specifically degrades the RNA of RNA-DNA hybrids. The sequence is that of Ribonuclease HIII from Streptococcus pneumoniae (strain JJA).